A 344-amino-acid polypeptide reads, in one-letter code: Protein-arginine kinase (344 aa).

The region spanning 14 to 244 is the Phosphagen kinase C-terminal domain; the sequence is IVLSSRIRLA…KQIIQQERLA (231 aa). ATP is bound by residues 17 to 21, histidine 81, arginine 115, 166 to 170, and 197 to 202; these read SSRIR, RASAM, and RGLYGE.

Belongs to the ATP:guanido phosphotransferase family.

It catalyses the reaction L-arginyl-[protein] + ATP = N(omega)-phospho-L-arginyl-[protein] + ADP + H(+). Functionally, catalyzes the specific phosphorylation of arginine residues in proteins. This Clostridium novyi (strain NT) protein is Protein-arginine kinase.